We begin with the raw amino-acid sequence, 119 residues long: Ribonuclease P protein component (119 aa).

This sequence belongs to the RnpA family. As to quaternary structure, consists of a catalytic RNA component (M1 or rnpB) and a protein subunit.

It catalyses the reaction Endonucleolytic cleavage of RNA, removing 5'-extranucleotides from tRNA precursor.. In terms of biological role, RNaseP catalyzes the removal of the 5'-leader sequence from pre-tRNA to produce the mature 5'-terminus. It can also cleave other RNA substrates such as 4.5S RNA. The protein component plays an auxiliary but essential role in vivo by binding to the 5'-leader sequence and broadening the substrate specificity of the ribozyme. This Salmonella paratyphi A (strain AKU_12601) protein is Ribonuclease P protein component.